A 218-amino-acid chain; its full sequence is N-(5'-phosphoribosyl)anthranilate isomerase (218 aa).

This sequence belongs to the TrpF family.

The catalysed reaction is N-(5-phospho-beta-D-ribosyl)anthranilate = 1-(2-carboxyphenylamino)-1-deoxy-D-ribulose 5-phosphate. Its pathway is amino-acid biosynthesis; L-tryptophan biosynthesis; L-tryptophan from chorismate: step 3/5. The chain is N-(5'-phosphoribosyl)anthranilate isomerase from Lachnoclostridium phytofermentans (strain ATCC 700394 / DSM 18823 / ISDg) (Clostridium phytofermentans).